Here is a 514-residue protein sequence, read N- to C-terminus: Sugar transport protein 11 (514 aa).

Residues 1–19 (MAGGAFIDESGHGGDYEGR) are Cytoplasmic-facing. The chain crosses the membrane as a helical span at residues 20–40 (VTAFVMITCIVAAMGGLLFGY). Residues 41–82 (DIGISGGVISMEDFLTKFFPDVLRQMQNKRGRETEYCKYDNE) are Extracellular-facing. Residues 83–103 (LLTLFTSSLYLAALFASFLAS) form a helical membrane-spanning segment. Topologically, residues 104 to 112 (TITRLFGRK) are cytoplasmic. The chain crosses the membrane as a helical span at residues 113 to 133 (VSMVIGSLAFLSGALLNGLAI). The Extracellular portion of the chain corresponds to 134–137 (NLEM). A helical membrane pass occupies residues 138–158 (LIIGRLFLGVGVGFANQSVPL). Residues 159 to 169 (YLSEMAPAKIR) lie on the Cytoplasmic side of the membrane. The chain crosses the membrane as a helical span at residues 170–190 (GALNIGFQLAITIGILAANIV). The Extracellular segment spans residues 191 to 204 (NYVTPKLQNGIGWR). Residues 205–225 (LSLGLAGVPAVMMLVGCFFLP) form a helical membrane-spanning segment. Over 226-290 (DTPNSILERG…RYRPQLTFCT (65 aa)) the chain is Cytoplasmic. Residues 291–311 (FIPFFQQLTGINVIMFYAPVL) form a helical membrane-spanning segment. Over 312–320 (FKTIGFGND) the chain is Extracellular. The helical transmembrane segment at 321–341 (ASLISAVITGLVNVLSTIVSI) threads the bilayer. Residues 342–350 (YSVDKFGRR) lie on the Cytoplasmic side of the membrane. The helical transmembrane segment at 351 to 371 (ALFLQGGFQMIVTQIAVGSMI) threads the bilayer. Over 372-389 (GWKFGFNGEGNLSGVDAD) the chain is Extracellular. A helical membrane pass occupies residues 390–410 (IILALICLYVAGFAWSWGPLG). Topologically, residues 411 to 428 (WLVPSEICPLEIRSAGQS) are cytoplasmic. The chain crosses the membrane as a helical span at residues 429–449 (LNVSVNMFFTFFIGQFFLTML). Residues 450–453 (CHMK) lie on the Extracellular side of the membrane. The helical transmembrane segment at 454–474 (FGLFYFFAGMVLIMTIFIYFL) threads the bilayer. Residues 475–514 (LPETKGVPIEEMGKVWKEHRYWGKYSNNDDGDDVDDDAYF) lie on the Cytoplasmic side of the membrane.

The protein belongs to the major facilitator superfamily. Sugar transporter (TC 2.A.1.1) family. As to expression, specifically expressed in germinating pollen and pollen tube (at protein level).

The protein localises to the cell membrane. Inhibited by uncouplers such as 2,4-dinitrophenol and carbonyl cyanide-m-chlorophenyl-hydrazone. Functionally, mediates an active uptake of hexoses, probably by sugar/hydrogen symport. Can transport glucose, galactose, mannose, xylose and 3-O-methylglucose, but not fructose and ribose. In Arabidopsis thaliana (Mouse-ear cress), this protein is Sugar transport protein 11 (STP11).